The chain runs to 302 residues: Recombination-associated protein RdgC (302 aa).

The protein belongs to the RdgC family.

The protein resides in the cytoplasm. Its subcellular location is the nucleoid. In terms of biological role, may be involved in recombination. In Xanthomonas campestris pv. campestris (strain 8004), this protein is Recombination-associated protein RdgC.